We begin with the raw amino-acid sequence, 217 residues long: Probable GTP-binding protein EngB (217 aa).

The region spanning 31–205 is the EngB-type G domain; it reads VGVEIAFAGR…LAILDAWCHP (175 aa). GTP contacts are provided by residues 39–46, 66–70, 84–87, 151–154, and 184–186; these read GRSNAGKS, GRTQL, DLPG, TKAD, and FSA. Positions 46 and 68 each coordinate Mg(2+).

The protein belongs to the TRAFAC class TrmE-Era-EngA-EngB-Septin-like GTPase superfamily. EngB GTPase family. It depends on Mg(2+) as a cofactor.

In terms of biological role, necessary for normal cell division and for the maintenance of normal septation. The sequence is that of Probable GTP-binding protein EngB from Shewanella amazonensis (strain ATCC BAA-1098 / SB2B).